The primary structure comprises 69 residues: Atypical cationic antimicrobial peptide (69 aa).

The signal sequence occupies residues methionine 1–cysteine 22. The propeptide occupies aspartate 23–arginine 45. Residues glutamate 25–arginine 45 are disordered. Acidic residues predominate over residues glutamate 30–glutamine 40.

This sequence belongs to the frog skin active peptide (FSAP) family. Monomer and/or weakly self-associated, oligomer, and amyloid-like fibril. Can adopt a monomeric nonamphipathic alpha-helical conformation, possibly with the aid of its cationic N- and C-termini, when bound to anionic membranes. Forms stable and ordered beta-sheet aggregates in aqueous environment or when bound to anionic or zwitterionic phospholipid vesicles. As to expression, expressed by the skin glands.

It is found in the secreted. It localises to the target cell membrane. Its function is as follows. Atypical cationic antimicrobial peptide with potent activity against Gram-negative and Gram-positive bacteria. Acts by inducing permeabilization of bacterial membrane. In vitro, also shows chemoattractant activity, which is mediated through a G protein-coupled receptor (probably FPR2 coupled to the ERK1/2 MAPK kinase pathway). Has slow-kinetic self-association and amyloid-like properties that modulate its activity. The soluble, weakly self-associated forms act on leukocytes to promote chemotaxis but have low antibacterial activity, the oligomers exhibit potent antimicrobial activity, whereas the amyloid-like fibrils have a very weak antibacterial activity. The membrane composition has a great influence on the peptide behavior. The peptide induces membrane leakage and insertion to a lesser extent in model membranes of the anionic lipid phosphatidylglycerol (PG) than in the model membranes of the zwitterionic lipid phosphatidylcholine (PC) vesicles. It forms more fibrils in PC than in PG. Membrane perturbations are more observed in the presence of PG than in the presence of PC. The peptide shows low hemolytic activity. In Phyllomedusa sauvagei (Sauvage's leaf frog), this protein is Atypical cationic antimicrobial peptide.